We begin with the raw amino-acid sequence, 150 residues long: Ribonuclease HI (150 aa).

Residues 1 to 141 form the RNase H type-1 domain; it reads MKSINAYTDG…VDVLARGQAM (141 aa). The Mg(2+) site is built by aspartate 9, glutamate 47, aspartate 69, and aspartate 133.

Belongs to the RNase H family. Monomer. Mg(2+) serves as cofactor.

It is found in the cytoplasm. It carries out the reaction Endonucleolytic cleavage to 5'-phosphomonoester.. In terms of biological role, endonuclease that specifically degrades the RNA of RNA-DNA hybrids. This chain is Ribonuclease HI, found in Xylella fastidiosa (strain 9a5c).